The sequence spans 226 residues: Lipoprotein signal peptidase (226 aa).

The next 3 membrane-spanning stretches (helical) occupy residues 12 to 32 (KVVA…KIWV), 69 to 89 (FLSL…AKLV), and 103 to 123 (SLII…GVIF). Catalysis depends on residues Asp-150 and Asp-184. A helical transmembrane segment spans residues 173–193 (FVFFHPVFNFADSCISIGLIL).

This sequence belongs to the peptidase A8 family.

It is found in the cell inner membrane. It carries out the reaction Release of signal peptides from bacterial membrane prolipoproteins. Hydrolyzes -Xaa-Yaa-Zaa-|-(S,diacylglyceryl)Cys-, in which Xaa is hydrophobic (preferably Leu), and Yaa (Ala or Ser) and Zaa (Gly or Ala) have small, neutral side chains.. It functions in the pathway protein modification; lipoprotein biosynthesis (signal peptide cleavage). In terms of biological role, this protein specifically catalyzes the removal of signal peptides from prolipoproteins. This is Lipoprotein signal peptidase from Porphyromonas gingivalis (strain ATCC 33277 / DSM 20709 / CIP 103683 / JCM 12257 / NCTC 11834 / 2561).